Consider the following 92-residue polypeptide: Endoribonuclease HigB (92 aa).

His92 is a catalytic residue.

As to quaternary structure, forms a complex with the antitoxin HigA which inhibits the mRNA interferase activity. The heterodimer dimerizes to form a HigB-(HigA)2-HigB tetramer that is able to bind to the DNA.

Toxic component of a type II toxin-antitoxin (TA) system. A ribosome-associated translation-dependent mRNA interferase. Inhibits translation by sequence-specific cleavage of mRNA. Prefers either in-frame or out-of-frame 5'-AAA-3' codons (lysine). Also cleaves the first three AAAs of stretches of four or more A sequences. 20% of codons containing AA are cleaved and occassionally cuts even at a single A. The chain is Endoribonuclease HigB from Proteus vulgaris.